The following is a 245-amino-acid chain: uncharacterized protein (245 aa).

Transmembrane regions (helical) follow at residues 29-51 (LVVL…RIGM) and 61-83 (TILF…LMLH).

It is found in the cell membrane. This is an uncharacterized protein from Treponema pallidum (strain Nichols).